A 420-amino-acid chain; its full sequence is Tyrosine--tRNA ligase (420 aa).

Y36 lines the L-tyrosine pocket. A 'HIGH' region motif is present at residues 41–50; sequence PTADSLHIGH. 2 residues coordinate L-tyrosine: Y170 and Q174. The 'KMSKS' region signature appears at 231 to 235; it reads KFGKT. An ATP-binding site is contributed by K234. One can recognise an S4 RNA-binding domain in the interval 353–420; the sequence is RNIVEVIVET…KKKYFMVNYK (68 aa).

Belongs to the class-I aminoacyl-tRNA synthetase family. TyrS type 1 subfamily. As to quaternary structure, homodimer.

It is found in the cytoplasm. The enzyme catalyses tRNA(Tyr) + L-tyrosine + ATP = L-tyrosyl-tRNA(Tyr) + AMP + diphosphate + H(+). In terms of biological role, catalyzes the attachment of tyrosine to tRNA(Tyr) in a two-step reaction: tyrosine is first activated by ATP to form Tyr-AMP and then transferred to the acceptor end of tRNA(Tyr). In Staphylococcus saprophyticus subsp. saprophyticus (strain ATCC 15305 / DSM 20229 / NCIMB 8711 / NCTC 7292 / S-41), this protein is Tyrosine--tRNA ligase.